We begin with the raw amino-acid sequence, 324 residues long: Beta-ketoacyl-[acyl-carrier-protein] synthase III (324 aa).

Catalysis depends on residues Cys-114 and His-251. Residues 252 to 256 form an ACP-binding region; that stretch reads QANLR. The active site involves Asn-281.

The protein belongs to the thiolase-like superfamily. FabH family. In terms of assembly, homodimer.

Its subcellular location is the cytoplasm. It catalyses the reaction malonyl-[ACP] + acetyl-CoA + H(+) = 3-oxobutanoyl-[ACP] + CO2 + CoA. It participates in lipid metabolism; fatty acid biosynthesis. Catalyzes the condensation reaction of fatty acid synthesis by the addition to an acyl acceptor of two carbons from malonyl-ACP. Catalyzes the first condensation reaction which initiates fatty acid synthesis and may therefore play a role in governing the total rate of fatty acid production. Possesses both acetoacetyl-ACP synthase and acetyl transacylase activities. Its substrate specificity determines the biosynthesis of branched-chain and/or straight-chain of fatty acids. The chain is Beta-ketoacyl-[acyl-carrier-protein] synthase III from Dinoroseobacter shibae (strain DSM 16493 / NCIMB 14021 / DFL 12).